The chain runs to 159 residues: Ribosomal RNA large subunit methyltransferase H (159 aa).

S-adenosyl-L-methionine-binding positions include L76, G108, and 127 to 132; that span reads FSRMTF.

This sequence belongs to the RNA methyltransferase RlmH family. In terms of assembly, homodimer.

The protein localises to the cytoplasm. It catalyses the reaction pseudouridine(1915) in 23S rRNA + S-adenosyl-L-methionine = N(3)-methylpseudouridine(1915) in 23S rRNA + S-adenosyl-L-homocysteine + H(+). Specifically methylates the pseudouridine at position 1915 (m3Psi1915) in 23S rRNA. The protein is Ribosomal RNA large subunit methyltransferase H of Bacillus pumilus (strain SAFR-032).